Consider the following 70-residue polypeptide: uncharacterized protein (70 aa).

Positions 1–16 are cleaved as a signal peptide; sequence MKLLLVLITLIIAALA.

This is an uncharacterized protein from Orgyia pseudotsugata (Douglas-fir tussock moth).